Reading from the N-terminus, the 422-residue chain is Gamma-glutamyl phosphate reductase (422 aa).

This sequence belongs to the gamma-glutamyl phosphate reductase family.

The protein resides in the cytoplasm. It catalyses the reaction L-glutamate 5-semialdehyde + phosphate + NADP(+) = L-glutamyl 5-phosphate + NADPH + H(+). It participates in amino-acid biosynthesis; L-proline biosynthesis; L-glutamate 5-semialdehyde from L-glutamate: step 2/2. Its function is as follows. Catalyzes the NADPH-dependent reduction of L-glutamate 5-phosphate into L-glutamate 5-semialdehyde and phosphate. The product spontaneously undergoes cyclization to form 1-pyrroline-5-carboxylate. This Nitrosomonas europaea (strain ATCC 19718 / CIP 103999 / KCTC 2705 / NBRC 14298) protein is Gamma-glutamyl phosphate reductase.